Here is a 621-residue protein sequence, read N- to C-terminus: uncharacterized protein (621 aa).

5 positions are modified to phosphoserine: S269, S271, S274, S290, and S292. LRR repeat units lie at residues 333–354 (QLLY…VFLS), 357–379 (SLVS…GELP), 380–401 (QLCS…YHIS), 404–425 (HLQI…ENVP), 426–447 (SLEK…RRLV), and 451–472 (NFEE…YRIT). Residues 552–581 (SKNASGGDTSSNVSLLNGSASEEIPQNTES) form a disordered region.

The protein resides in the cytoplasm. The protein localises to the nucleus. It is found in the vacuole membrane. This is an uncharacterized protein from Schizosaccharomyces pombe (strain 972 / ATCC 24843) (Fission yeast).